The sequence spans 454 residues: Bifunctional protein GlmU (454 aa).

The interval 1–225 (MNIVILAAGM…VWETLGVNSK (225 aa)) is pyrophosphorylase. UDP-N-acetyl-alpha-D-glucosamine-binding positions include 6 to 9 (LAAG), lysine 20, glutamine 71, 76 to 77 (GT), 98 to 100 (YGD), glycine 135, glutamate 150, asparagine 165, and asparagine 223. Aspartate 100 serves as a coordination point for Mg(2+). Residue asparagine 223 coordinates Mg(2+). A linker region spans residues 226-246 (LQLAEVERIHQGNQARRLLEA). Residues 247–454 (GVTLLDPARI…WQRPVKQPKQ (208 aa)) are N-acetyltransferase. 2 residues coordinate UDP-N-acetyl-alpha-D-glucosamine: arginine 329 and lysine 347. Histidine 359 functions as the Proton acceptor in the catalytic mechanism. Positions 362 and 373 each coordinate UDP-N-acetyl-alpha-D-glucosamine. Acetyl-CoA contacts are provided by residues alanine 376, 382-383 (NY), serine 401, alanine 419, and arginine 436.

In the N-terminal section; belongs to the N-acetylglucosamine-1-phosphate uridyltransferase family. The protein in the C-terminal section; belongs to the transferase hexapeptide repeat family. As to quaternary structure, homotrimer. Requires Mg(2+) as cofactor.

It is found in the cytoplasm. The catalysed reaction is alpha-D-glucosamine 1-phosphate + acetyl-CoA = N-acetyl-alpha-D-glucosamine 1-phosphate + CoA + H(+). It catalyses the reaction N-acetyl-alpha-D-glucosamine 1-phosphate + UTP + H(+) = UDP-N-acetyl-alpha-D-glucosamine + diphosphate. It functions in the pathway nucleotide-sugar biosynthesis; UDP-N-acetyl-alpha-D-glucosamine biosynthesis; N-acetyl-alpha-D-glucosamine 1-phosphate from alpha-D-glucosamine 6-phosphate (route II): step 2/2. Its pathway is nucleotide-sugar biosynthesis; UDP-N-acetyl-alpha-D-glucosamine biosynthesis; UDP-N-acetyl-alpha-D-glucosamine from N-acetyl-alpha-D-glucosamine 1-phosphate: step 1/1. It participates in bacterial outer membrane biogenesis; LPS lipid A biosynthesis. In terms of biological role, catalyzes the last two sequential reactions in the de novo biosynthetic pathway for UDP-N-acetylglucosamine (UDP-GlcNAc). The C-terminal domain catalyzes the transfer of acetyl group from acetyl coenzyme A to glucosamine-1-phosphate (GlcN-1-P) to produce N-acetylglucosamine-1-phosphate (GlcNAc-1-P), which is converted into UDP-GlcNAc by the transfer of uridine 5-monophosphate (from uridine 5-triphosphate), a reaction catalyzed by the N-terminal domain. The protein is Bifunctional protein GlmU of Cupriavidus taiwanensis (strain DSM 17343 / BCRC 17206 / CCUG 44338 / CIP 107171 / LMG 19424 / R1) (Ralstonia taiwanensis (strain LMG 19424)).